The following is a 247-amino-acid chain: Chymase (247 aa).

The signal sequence occupies residues 1 to 19; it reads MLLLPLPLLLLFLCSRAEA. Positions 20 to 21 are cleaved as a propeptide — activation peptide; the sequence is GE. Residues 22–245 enclose the Peptidase S1 domain; the sequence is IIGGTECKPH…YRPWINKILQ (224 aa). Cys-51 and Cys-67 are joined by a disulfide. The active-site Charge relay system is His-66. 2 N-linked (GlcNAc...) asparagine glycosylation sites follow: Asn-80 and Asn-103. The Charge relay system role is filled by Asp-110. 2 disulfide bridges follow: Cys-144/Cys-209 and Cys-175/Cys-188. Ser-203 (charge relay system) is an active-site residue.

It belongs to the peptidase S1 family. Granzyme subfamily.

The protein localises to the secreted. The protein resides in the cytoplasmic granule. It catalyses the reaction Preferential cleavage: Phe-|-Xaa &gt; Tyr-|-Xaa &gt; Trp-|-Xaa &gt; Leu-|-Xaa.. Functionally, major secreted protease of mast cells with suspected roles in vasoactive peptide generation, extracellular matrix degradation, and regulation of gland secretion. The polypeptide is Chymase (CMA1) (Papio hamadryas (Hamadryas baboon)).